We begin with the raw amino-acid sequence, 511 residues long: Thioredoxin reductase 2, mitochondrial (511 aa).

The N-terminal 21 residues, 1-21 (MAALRGAAARFRGRAPGGARG), are a transit peptide targeting the mitochondrion. 29 to 58 (DLLVIGGGSGGLACAKEAAQLGKKVAVLDY) is an FAD binding site. Cysteines 74 and 79 form a disulfide. K316 carries the N6-succinyllysine modification. Catalysis depends on H484, which acts as the Proton acceptor. A cross-link (cysteinyl-selenocysteine (Cys-Sec)) is located at residues 509-510 (CU). Residue U510 is a non-standard amino acid, selenocysteine.

This sequence belongs to the class-I pyridine nucleotide-disulfide oxidoreductase family. As to quaternary structure, homodimer. The cofactor is FAD.

The protein localises to the mitochondrion. The enzyme catalyses [thioredoxin]-dithiol + NADP(+) = [thioredoxin]-disulfide + NADPH + H(+). Inhibited by 1-chloro-2,4-dinitrobenzene and by zinc, calcium, magnesium and Fe(2+) ions. In terms of biological role, involved in the control of reactive oxygen species levels and the regulation of mitochondrial redox homeostasis. Maintains thioredoxin in a reduced state. May play a role in redox-regulated cell signaling. The sequence is that of Thioredoxin reductase 2, mitochondrial (TXNRD2) from Bos taurus (Bovine).